A 605-amino-acid polypeptide reads, in one-letter code: MKKKKNGMGAAADRGRLLALAHHDKLNPTKPSEAQRRFKPSILLLLGSSLPRLVPPLPSSFLPVVIKQTEFHQRWLVGDLNPPPPPCHLLPIQGQGQMQMQQRRKPPPAAAPVAAKQPSPRRTPGPLSFAGALLSLLVVATFLYINDHGNMMPPHASPDPDLRLLQEAAHQKVNSILLSRHAPAPPPRTNTNTSSSDQHLRLINIPMSSDLDLELGGNSTSSSGVEIQFEQQQQQEEKNLRGCELYKGRWVYDAAGREAPLYRESECGFLTEQVTCMRNGRRDDSYQRWRWQPEGCDLPSFDARALLERLRNKRMMFVGDSLNRNQWESMVCLVQSAIPYGQKTLTKFVNNGSLNVFRAHEYNATVEFYWAPFLVQSNSDDPQVHSVRDRVIAWRSIAKHAANWKGVHYLVFNTYIWWLNNFQIKVLKSRGAPFAGSGGWSSRYALVDRAIAYREVLKTWAKWVDRRIDPNKTHVFFMAMSPNHFMPEAWGGSAGAVKCAMETQPIVNRTSGGLDIGTDWRLHGVARGVLRSMRRVGVRFVDITALSELRKDAHTSVHTLRQGKLLTPEQQADPRTYADCIHWCLPGLPDTWNHFLYAHIVAHAA.

Residues 1-124 (MKKKKNGMGA…AKQPSPRRTP (124 aa)) are Cytoplasmic-facing. The tract at residues 86 to 126 (PCHLLPIQGQGQMQMQQRRKPPPAAAPVAAKQPSPRRTPGP) is disordered. Residues 125-145 (GPLSFAGALLSLLVVATFLYI) form a helical; Signal-anchor for type II membrane protein membrane-spanning segment. Residues 146-605 (NDHGNMMPPH…LYAHIVAHAA (460 aa)) lie on the Lumenal side of the membrane. N-linked (GlcNAc...) asparagine glycosylation is found at Asn192 and Asn218. Intrachain disulfides connect Cys243/Cys296, Cys267/Cys332, Cys276/Cys584, and Cys499/Cys580. A GDS motif motif is present at residues 319 to 321 (GDS). Ser321 functions as the Nucleophile in the catalytic mechanism. N-linked (GlcNAc...) asparagine glycans are attached at residues Asn351, Asn363, Asn471, and Asn508. Residue Asp579 is the Proton donor of the active site. A DXXH motif motif is present at residues 579-582 (DCIH). His582 functions as the Proton acceptor in the catalytic mechanism.

This sequence belongs to the PC-esterase family. TBL subfamily. Expressed in roots, leaves and stems.

It is found in the golgi apparatus membrane. Xylan acetyltransferase required for 2-O- and 3-O-monoacetylation of xylosyl residues in xylan. Catalyzes the 2-O-acetylation of xylan, followed by nonenzymatic acetyl migration to the O-3 position, resulting in products that are monoacetylated at both O-2 and O-3 positions. The polypeptide is Xylan O-acetyltransferase 7 (Oryza sativa subsp. japonica (Rice)).